Reading from the N-terminus, the 193-residue chain is Ion-translocating oxidoreductase complex subunit B (193 aa).

Residues 1-26 (MSTMLIAVILLTLLALFFGVLLGFAA) form a hydrophobic region. Residues 32–90 (EGNPIVDELEAILPQTQCGQCGYPGCRPYAEAIANGDKVNKCPPGGTATMEKLASLMGV) enclose the 4Fe-4S domain. [4Fe-4S] cluster-binding residues include C49, C52, C57, C73, C114, C117, C120, C124, C144, C147, C150, and C154. 4Fe-4S ferredoxin-type domains follow at residues 105 to 134 (KVAY…GAGK) and 136 to 164 (MHTV…MIPV).

The protein belongs to the 4Fe4S bacterial-type ferredoxin family. RnfB subfamily. The complex is composed of six subunits: RnfA, RnfB, RnfC, RnfD, RnfE and RnfG. It depends on [4Fe-4S] cluster as a cofactor.

It localises to the cell inner membrane. Its function is as follows. Part of a membrane-bound complex that couples electron transfer with translocation of ions across the membrane. In Shewanella sp. (strain MR-7), this protein is Ion-translocating oxidoreductase complex subunit B.